We begin with the raw amino-acid sequence, 142 residues long: Hemoglobin subunit alpha-4 (142 aa).

A Globin domain is found at 2-142; the sequence is VLSAADKSNV…VSTVLTSKYR (141 aa). Histidine 59 is a binding site for O2. Residue histidine 88 coordinates heme b.

The protein belongs to the globin family. In terms of assembly, heterotetramer of two alpha chains and two beta chains. Red blood cells.

Its function is as follows. Involved in oxygen transport from the lung to the various peripheral tissues. The protein is Hemoglobin subunit alpha-4 of Bubalus bubalis (Domestic water buffalo).